Reading from the N-terminus, the 203-residue chain is ATP-dependent Clp protease proteolytic subunit (203 aa).

Serine 103 (nucleophile) is an active-site residue. Histidine 128 is an active-site residue.

This sequence belongs to the peptidase S14 family. In terms of assembly, fourteen ClpP subunits assemble into 2 heptameric rings which stack back to back to give a disk-like structure with a central cavity, resembling the structure of eukaryotic proteasomes.

The protein resides in the cytoplasm. It catalyses the reaction Hydrolysis of proteins to small peptides in the presence of ATP and magnesium. alpha-casein is the usual test substrate. In the absence of ATP, only oligopeptides shorter than five residues are hydrolyzed (such as succinyl-Leu-Tyr-|-NHMec, and Leu-Tyr-Leu-|-Tyr-Trp, in which cleavage of the -Tyr-|-Leu- and -Tyr-|-Trp bonds also occurs).. Cleaves peptides in various proteins in a process that requires ATP hydrolysis. Has a chymotrypsin-like activity. Plays a major role in the degradation of misfolded proteins. This Dichelobacter nodosus (strain VCS1703A) protein is ATP-dependent Clp protease proteolytic subunit.